Reading from the N-terminus, the 294-residue chain is 7,8-dihydropterin-6-methyl-4-(beta-D-ribofuranosyl)-aminobenzene-5'-phosphate synthase (294 aa).

Positions 116, 186, 228, and 265 each coordinate substrate.

The protein belongs to the metallo-beta-lactamase superfamily. It depends on Mg(2+) as a cofactor.

It catalyses the reaction 4-(beta-D-ribofuranosyl)aminobenzene 5'-phosphate + (7,8-dihydropterin-6-yl)methyl diphosphate = N-[(7,8-dihydropterin-6-yl)methyl]-4-(beta-D-ribofuranosyl)aniline 5'-phosphate + diphosphate. It participates in cofactor biosynthesis; 5,6,7,8-tetrahydromethanopterin biosynthesis. Its function is as follows. Catalyzes the condensation of 6-hydroxymethyl-7,8-dihydropterin pyrophosphate (DHPP) with 4-(beta-D-ribofuranosyl)-aminobenzene-5'-phosphate (beta-RFA-P) to form 7,8-dihydropterin-6-methyl-4-(beta-D-ribofuranosyl)-aminobenzene-5'-phosphate, a precursor in the biosynthesis of 5,6,7,8-tetrahydromethanopterin (H4MPT). To a lesser extent, is able to condense beta-RFA-P with another arylamine, 1-(4-aminophenyl)-1-deoxy-D-ribitol (APDR), to form 7,8-dihydropterin-6-methyl-1-(4-aminophenyl)-1-deoxy-D-ribitol. Dephosphorylated beta-RFA-P is not a substrate. The protein is 7,8-dihydropterin-6-methyl-4-(beta-D-ribofuranosyl)-aminobenzene-5'-phosphate synthase of Methanocaldococcus jannaschii (strain ATCC 43067 / DSM 2661 / JAL-1 / JCM 10045 / NBRC 100440) (Methanococcus jannaschii).